The chain runs to 461 residues: Flavin-containing monooxygenase FMO GS-OX-like 8 (461 aa).

Position 20–25 (20–25 (GAGPSG)) interacts with FAD. Residue 220-225 (GCSMSG) coordinates NADP(+).

The protein belongs to the FMO family. As to quaternary structure, interacts with EER5. Requires FAD as cofactor.

In terms of biological role, catalyzes the conversion of methylthioalkyl glucosinolates of any chain length into methylsulfinylalkyl glucosinolates. This Arabidopsis thaliana (Mouse-ear cress) protein is Flavin-containing monooxygenase FMO GS-OX-like 8.